The sequence spans 210 residues: DNA-directed RNA polymerase subunit 5-like protein 1 (210 aa).

It belongs to the archaeal Rpo5/eukaryotic RPB5 RNA polymerase subunit family.

The protein resides in the nucleus. The chain is DNA-directed RNA polymerase subunit 5-like protein 1 (NRPB5L1) from Arabidopsis thaliana (Mouse-ear cress).